The chain runs to 356 residues: NF-kappa-B inhibitor beta (356 aa).

2 positions are modified to phosphoserine; by RPS6KA1: S19 and S23. 3 ANK repeats span residues 57–86, 93–122, and 126–155; these read DGDT…GTEY, LGQT…GLCV, and RGHT…RRPR. Residues 149–193 are disordered; it reads PRPRRPREAPDTYLAQGPDRTPDTNHTPVALYPDSDLEKEEEESE. Position 183 is a phosphoserine (S183). Residues 183-193 show a composition bias toward acidic residues; the sequence is SDLEKEEEESE. ANK repeat units follow at residues 206–235, 240–269, and 273–302; these read EGHT…DLDK, CGRS…NPAA, and GGRT…PEPE. The disordered stretch occupies residues 298-356; the sequence is APEPEGEDEKSGPCSSSSDSDSGDEGDEYDDIVVHSSRSQTRLPPTPASKPLPDDPRPV. Residues S313 and S315 each carry the phosphoserine; by CK2 modification. The span at 318–328 shows a compositional bias: acidic residues; the sequence is DSGDEGDEYDD.

Belongs to the NF-kappa-B inhibitor family. Interacts with THRB (via ligand-binding domain). Interacts with RELA and REL. Interacts with COMMD1. Interacts with inhibitor kappa B-interacting Ras-like NKIRAS1 and NKIRAS2. Phosphorylated by RPS6KA1; followed by degradation. Interaction with NKIRAS1 and NKIRAS2 probably prevents phosphorylation. Expressed in all tissues examined.

It localises to the cytoplasm. The protein localises to the nucleus. Functionally, inhibits NF-kappa-B by complexing with and trapping it in the cytoplasm. However, the unphosphorylated form resynthesized after cell stimulation is able to bind NF-kappa-B allowing its transport to the nucleus and protecting it to further NFKBIA-dependent inactivation. Association with inhibitor kappa B-interacting NKIRAS1 and NKIRAS2 prevent its phosphorylation rendering it more resistant to degradation, explaining its slower degradation. This Homo sapiens (Human) protein is NF-kappa-B inhibitor beta (NFKBIB).